The following is a 187-amino-acid chain: Ribosome-recycling factor (187 aa).

Belongs to the RRF family.

It is found in the cytoplasm. In terms of biological role, responsible for the release of ribosomes from messenger RNA at the termination of protein biosynthesis. May increase the efficiency of translation by recycling ribosomes from one round of translation to another. In Methylorubrum extorquens (strain CM4 / NCIMB 13688) (Methylobacterium extorquens), this protein is Ribosome-recycling factor.